An 869-amino-acid chain; its full sequence is Valine--tRNA ligase (869 aa).

Positions P47–N57 match the 'HIGH' region motif. Positions K521–S525 match the 'KMSKS' region motif. ATP is bound at residue K524.

The protein belongs to the class-I aminoacyl-tRNA synthetase family. ValS type 2 subfamily.

The protein localises to the cytoplasm. It carries out the reaction tRNA(Val) + L-valine + ATP = L-valyl-tRNA(Val) + AMP + diphosphate. Catalyzes the attachment of valine to tRNA(Val). As ValRS can inadvertently accommodate and process structurally similar amino acids such as threonine, to avoid such errors, it has a 'posttransfer' editing activity that hydrolyzes mischarged Thr-tRNA(Val) in a tRNA-dependent manner. This chain is Valine--tRNA ligase, found in Methanosarcina acetivorans (strain ATCC 35395 / DSM 2834 / JCM 12185 / C2A).